A 301-amino-acid chain; its full sequence is NADH-cytochrome b5 reductase 3 (301 aa).

Gly2 carries N-myristoyl glycine lipidation. The FAD-binding FR-type domain occupies 40 to 152; the sequence is DIKYPLRLID…RGPSGLLVYQ (113 aa). Lys42 is subject to N6-acetyllysine. Tyr43 is subject to Phosphotyrosine. 6 residues coordinate FAD: Arg92, Pro93, Tyr94, Val109, Lys111, and Phe114. Position 120 is an N6-acetyllysine (Lys120). Residues Lys126, Met127, Ser128, and Thr185 each contribute to the FAD site.

The protein belongs to the flavoprotein pyridine nucleotide cytochrome reductase family. As to quaternary structure, component of a complex composed of cytochrome b5, NADH-cytochrome b5 reductase (CYB5R3) and MTARC2. Interacts with MTLN; the interaction is required to maintain cellular lipid composition and leads to stimulation of mitochondrial respiratory complex I activity. The cofactor is FAD. In terms of tissue distribution, expressed at late stages of erythroid maturation.

It is found in the endoplasmic reticulum membrane. It localises to the mitochondrion outer membrane. Its subcellular location is the cytoplasm. The enzyme catalyses 2 Fe(III)-[cytochrome b5] + NADH = 2 Fe(II)-[cytochrome b5] + NAD(+) + H(+). In terms of biological role, catalyzes the reduction of two molecules of cytochrome b5 using NADH as the electron donor. This chain is NADH-cytochrome b5 reductase 3, found in Homo sapiens (Human).